Here is a 297-residue protein sequence, read N- to C-terminus: ATP phosphoribosyltransferase (297 aa).

Position 1 is an N-acetylmethionine (methionine 1).

Belongs to the ATP phosphoribosyltransferase family.

It is found in the cytoplasm. It catalyses the reaction 1-(5-phospho-beta-D-ribosyl)-ATP + diphosphate = 5-phospho-alpha-D-ribose 1-diphosphate + ATP. The protein operates within amino-acid biosynthesis; L-histidine biosynthesis; L-histidine from 5-phospho-alpha-D-ribose 1-diphosphate: step 1/9. Functionally, catalyzes the condensation of ATP and 5-phosphoribose 1-diphosphate to form N'-(5'-phosphoribosyl)-ATP (PR-ATP). Has a crucial role in the pathway because the rate of histidine biosynthesis seems to be controlled primarily by regulation of the enzymatic activity. The protein is ATP phosphoribosyltransferase (HIS1) of Saccharomyces cerevisiae (strain ATCC 204508 / S288c) (Baker's yeast).